Here is a 390-residue protein sequence, read N- to C-terminus: Heparan sulfate glucosamine 3-O-sulfotransferase 3B1 (390 aa).

The interval 1–25 (MGQRLSGGRSCLDVPGRLLPQPPPP) is disordered. At 1–32 (MGQRLSGGRSCLDVPGRLLPQPPPPPPPVRRK) the chain is on the cytoplasmic side. A helical; Signal-anchor for type II membrane protein membrane pass occupies residues 33–53 (LALLFAMLCVWLYMFLYSCAG). The Lumenal segment spans residues 54 to 390 (SCAAAPGLLL…QMTGHDFGWD (337 aa)). Residues 74 to 133 (PPALATAPDGTPPRLPFRAPPATPLASGKEMAEGAASPEEQSPEVPDSPSPISSFFSGSG) form a disordered region. Residues 83–96 (GTPPRLPFRAPPAT) show a composition bias toward pro residues. The span at 123–133 (SPISSFFSGSG) shows a compositional bias: low complexity. 147–151 (KGGTR) is a binding site for 3'-phosphoadenylyl sulfate. Substrate is bound by residues 169-175 (EPHFFDR) and 200-203 (KTPS). Residues Arg-228 and Ser-236 each contribute to the 3'-phosphoadenylyl sulfate site. N-linked (GlcNAc...) asparagine glycosylation is present at Asn-258. 268–269 (WS) serves as a coordination point for substrate. Asn-329 carries an N-linked (GlcNAc...) asparagine glycan. Cysteines 336 and 348 form a disulfide. 3'-phosphoadenylyl sulfate is bound at residue 353-357 (KGRTH).

The protein belongs to the sulfotransferase 1 family. Ubiquitous. Most abundant in liver and placenta, followed by heart and kidney.

Its subcellular location is the golgi apparatus membrane. It carries out the reaction alpha-D-glucosaminyl-[heparan sulfate](n) + 3'-phosphoadenylyl sulfate = 3-sulfo-alpha-D-glucosaminyl-[heparan sulfate](n) + adenosine 3',5'-bisphosphate + H(+). Its function is as follows. Sulfotransferase that utilizes 3'-phospho-5'-adenylyl sulfate (PAPS) to catalyze the transfer of a sulfo group to an N-unsubstituted glucosamine linked to a 2-O-sulfo iduronic acid unit on heparan sulfate. Catalyzes the O-sulfation of glucosamine in IdoUA2S-GlcNS and also in IdoUA2S-GlcNH2. The substrate-specific O-sulfation generates an enzyme-modified heparan sulfate which acts as a binding receptor to Herpes simplex virus-1 (HSV-1) and permits its entry. Unlike HS3ST1/3-OST-1, does not convert non-anticoagulant heparan sulfate to anticoagulant heparan sulfate. This Homo sapiens (Human) protein is Heparan sulfate glucosamine 3-O-sulfotransferase 3B1 (HS3ST3B1).